A 349-amino-acid polypeptide reads, in one-letter code: MRPIKLMGHERSLTQVKFNREGDLIFSVAKDSTASIWYSSNGERLGTLEGHIGTIWSIDVDADTILCATGSADLTIKLWKIETGECVQSWEMPTPVRRVAFSPDNKRLLAVTDQVMGQTGTISVFDINYEGDYTKQQSKPSLIIETRSDAKKVTVAGWSANGDFIIAGHEDGYVSKYNSSTGEFIETAQVHGIHNEEKIASITDIQFAPEDKSYIVTASKDKCSCLVDVDTLELMKVYKADAPMNTAAITPIKDFVILGGGQEARNVTTTAESQGKFEARFYHKIFIDEIGRVKGHFGPLNSIAVHPDGTGYASGGEDGFIRLHYFDKSYFDFEFDTERAERAMASSAA.

WD repeat units follow at residues Gly8–Glu49, His51–Glu91, Pro93–Lys135, Ser148–Thr187, Glu197–Lys239, and Gly295–Asp336.

The protein belongs to the eIF-3 subunit I family. Component of the eukaryotic translation initiation factor 3 (eIF-3) complex.

Its subcellular location is the cytoplasm. In terms of biological role, component of the eukaryotic translation initiation factor 3 (eIF-3) complex, which is involved in protein synthesis of a specialized repertoire of mRNAs and, together with other initiation factors, stimulates binding of mRNA and methionyl-tRNAi to the 40S ribosome. The eIF-3 complex specifically targets and initiates translation of a subset of mRNAs involved in cell proliferation. In Debaryomyces hansenii (strain ATCC 36239 / CBS 767 / BCRC 21394 / JCM 1990 / NBRC 0083 / IGC 2968) (Yeast), this protein is Eukaryotic translation initiation factor 3 subunit I.